The primary structure comprises 85 residues: Acyl carrier protein ScoB (85 aa).

A Carrier domain is found at 1–77 (MPAPLTLDGF…QWWQLLSARQ (77 aa)). The residue at position 38 (Ser38) is an O-(pantetheine 4'-phosphoryl)serine.

The protein belongs to the acyl carrier protein (ACP) family. It depends on pantetheine 4'-phosphate as a cofactor.

It functions in the pathway lipid metabolism; fatty acid metabolism. In terms of biological role, acyl-carrier protein (ACP) involved in the biosynthesis of a unique class of isonitrile lipopeptides (INLPs). Is the dedicated ACP for the loading of activated acyl groups catalyzed by ScoC. This Streptomyces coeruleorubidus protein is Acyl carrier protein ScoB.